The sequence spans 212 residues: Regulator of G-protein signaling 2 (212 aa).

2 disordered regions span residues 11-33 and 48-69; these read HDCG…REKM and FLQN…PQTF. The segment at 32-66 is necessary for membrane association; it reads KMKRTLLKDWKTRLSYFLQNSSSPGKPKTGKKSKP. The tract at residues 79-116 is necessary to inhibit protein synthesis; the sequence is LWAEAFDELLASKYGLAAFRAFLKSEFCEENIEFWLAC. Positions 83–199 constitute an RGS domain; sequence AFDELLASKY…LESEFYQDLC (117 aa).

As to quaternary structure, interacts with GNAQ. Does not interact with GNAI1 and GNAI3. Interacts with EIF2B5. Interacts with PRKG1 (isoform alpha). Phosphorylated by protein kinase C. Phosphorylation by PRKG1 leads to activation of RGS2 activity.

Its subcellular location is the cell membrane. It localises to the cytoplasm. It is found in the nucleus. The protein resides in the nucleolus. In terms of biological role, regulates G protein-coupled receptor signaling cascades. Inhibits signal transduction by increasing the GTPase activity of G protein alpha subunits, thereby driving them into their inactive GDP-bound form. It is involved in the negative regulation of the angiotensin-activated signaling pathway. Plays a role in the regulation of blood pressure in response to signaling via G protein-coupled receptors and GNAQ. Plays a role in regulating the constriction and relaxation of vascular smooth muscle. Binds EIF2B5 and blocks its activity, thereby inhibiting the translation of mRNA into protein. The chain is Regulator of G-protein signaling 2 (RGS2) from Sus scrofa (Pig).